The chain runs to 402 residues: MFIPEKIGTPLSPNATKVMILGSGELGKEVTIAFQRLGVEVHAVDRYDNAPAHQVAHFSYVIDMTDAAAVRELVTTIKPDFIIPEIEALATDELVRIEQEGLATVVPTARATQLTMNREGIRRLASEELGLPTSGYEFCSTFEEFTAAAERLGYPNVVKPVMSSSGKGQSVVTSAEDLESAWEYAMSGARVSNQRVIVEQFVEFDYEITLLTVRGIDPATGKPATWFCEPIGHRQQDGDYVESWQPMEMTAPALENARSVAARITNALGGRGVFGVELFVSGDDVYFSEVSPRPHDTGLVTLATQRFSEFELHAKAVLGLPVDVTLTSPGASAVIYGGVDSPGVSYAGLAEALAVAETDVRLFGKPEAFTKRRMGVAVSTAEDTATARDRATLAAAAVTVHG.

N(1)-(5-phospho-beta-D-ribosyl)glycinamide is bound by residues 25–26 and Glu85; that span reads EL. ATP-binding positions include Arg118, Lys159, 164-169, 199-202, and Glu207; these read SSGKGQ and EQFV. Positions 123 to 318 constitute an ATP-grasp domain; it reads RLASEELGLP…EFELHAKAVL (196 aa). The Mg(2+) site is built by Glu277 and Glu289. N(1)-(5-phospho-beta-D-ribosyl)glycinamide-binding positions include Asp296, Lys365, and 372 to 373; that span reads RR.

This sequence belongs to the PurK/PurT family. In terms of assembly, homodimer.

The enzyme catalyses N(1)-(5-phospho-beta-D-ribosyl)glycinamide + formate + ATP = N(2)-formyl-N(1)-(5-phospho-beta-D-ribosyl)glycinamide + ADP + phosphate + H(+). It functions in the pathway purine metabolism; IMP biosynthesis via de novo pathway; N(2)-formyl-N(1)-(5-phospho-D-ribosyl)glycinamide from N(1)-(5-phospho-D-ribosyl)glycinamide (formate route): step 1/1. In terms of biological role, involved in the de novo purine biosynthesis. Catalyzes the transfer of formate to 5-phospho-ribosyl-glycinamide (GAR), producing 5-phospho-ribosyl-N-formylglycinamide (FGAR). Formate is provided by PurU via hydrolysis of 10-formyl-tetrahydrofolate. The sequence is that of Formate-dependent phosphoribosylglycinamide formyltransferase from Corynebacterium efficiens (strain DSM 44549 / YS-314 / AJ 12310 / JCM 11189 / NBRC 100395).